We begin with the raw amino-acid sequence, 170 residues long: UPF0260 protein RPE_1881 (170 aa).

This sequence belongs to the UPF0260 family.

The sequence is that of UPF0260 protein RPE_1881 from Rhodopseudomonas palustris (strain BisA53).